Consider the following 671-residue polypeptide: DNA ligase (671 aa).

Residues 36 to 40 (DAEYD), 85 to 86 (SL), and glutamate 116 contribute to the NAD(+) site. Lysine 118 acts as the N6-AMP-lysine intermediate in catalysis. NAD(+) is bound by residues arginine 139, glutamate 176, lysine 292, and lysine 316. Positions 410, 413, 428, and 434 each coordinate Zn(2+). In terms of domain architecture, BRCT spans 591 to 671 (QKGGRFQGMT…QFLAMFSEKE (81 aa)).

Belongs to the NAD-dependent DNA ligase family. LigA subfamily. Requires Mg(2+) as cofactor. Mn(2+) serves as cofactor.

The enzyme catalyses NAD(+) + (deoxyribonucleotide)n-3'-hydroxyl + 5'-phospho-(deoxyribonucleotide)m = (deoxyribonucleotide)n+m + AMP + beta-nicotinamide D-nucleotide.. Functionally, DNA ligase that catalyzes the formation of phosphodiester linkages between 5'-phosphoryl and 3'-hydroxyl groups in double-stranded DNA using NAD as a coenzyme and as the energy source for the reaction. It is essential for DNA replication and repair of damaged DNA. This is DNA ligase from Acidithiobacillus ferrooxidans (strain ATCC 23270 / DSM 14882 / CIP 104768 / NCIMB 8455) (Ferrobacillus ferrooxidans (strain ATCC 23270)).